Consider the following 290-residue polypeptide: Glutamate 5-kinase (290 aa).

An ATP-binding site is contributed by K21. Substrate-binding residues include S60, D151, and N163. 217–223 provides a ligand contact to ATP; it reads TGGMFTK.

It belongs to the glutamate 5-kinase family.

The protein localises to the cytoplasm. It carries out the reaction L-glutamate + ATP = L-glutamyl 5-phosphate + ADP. It participates in amino-acid biosynthesis; L-proline biosynthesis; L-glutamate 5-semialdehyde from L-glutamate: step 1/2. Its function is as follows. Catalyzes the transfer of a phosphate group to glutamate to form L-glutamate 5-phosphate. The protein is Glutamate 5-kinase of Leptospira interrogans serogroup Icterohaemorrhagiae serovar copenhageni (strain Fiocruz L1-130).